We begin with the raw amino-acid sequence, 241 residues long: Probable transcriptional regulatory protein NE0210 (241 aa).

It belongs to the TACO1 family.

The protein localises to the cytoplasm. This Nitrosomonas europaea (strain ATCC 19718 / CIP 103999 / KCTC 2705 / NBRC 14298) protein is Probable transcriptional regulatory protein NE0210.